Consider the following 213-residue polypeptide: Large ribosomal subunit protein uL3 (213 aa).

Residues 130 to 161 (KRGNMTHGSKNHRLPGSTGAGTTPGRVYPGKR) are disordered.

This sequence belongs to the universal ribosomal protein uL3 family. Part of the 50S ribosomal subunit. Forms a cluster with proteins L14 and L19.

Functionally, one of the primary rRNA binding proteins, it binds directly near the 3'-end of the 23S rRNA, where it nucleates assembly of the 50S subunit. This is Large ribosomal subunit protein uL3 from Picosynechococcus sp. (strain ATCC 27264 / PCC 7002 / PR-6) (Agmenellum quadruplicatum).